The primary structure comprises 359 residues: Guanine nucleotide-binding protein G(q) subunit alpha (359 aa).

S-palmitoyl cysteine attachment occurs at residues Cys9 and Cys10. The G-alpha domain maps to 38–359 (RELKLLLLGT…QLNLKEYNLV (322 aa)). Residues 41–54 (KLLLLGTGESGKST) form a G1 motif region. Ser50, Gly51, Lys52, Ser53, Thr54, Ser156, Leu180, Arg181, and Arg183 together coordinate GTP. Residue Ser53 participates in Mg(2+) binding. Residues 178 to 186 (DVLRVRVPT) form a G2 motif region. Thr186 provides a ligand contact to Mg(2+). The interval 201–210 (FRMVDVGGQR) is G3 motif. Gln209 bears the 5-glutamyl histamine mark. The interval 270-277 (ILFLNKKD) is G4 motif. GTP-binding residues include Asn274, Lys275, Asp277, and Ala331. The tract at residues 329 to 334 (TCATDT) is G5 motif.

Belongs to the G-alpha family. G(q) subfamily. As to quaternary structure, g proteins are composed of 3 units; alpha, beta and gamma. The alpha chain contains the guanine nucleotide binding site. Interacts (GDP-bound form) with RIC8A (via C-terminus); promoting GNAQ folding and association with the plasma membrane. Binds NHERF1. Forms a complex with PECAM1 and BDKRB2. Interacts with GAS2L2. Palmitoylated by ZDHHC3 and ZDHHC7. Palmitoylation occurs in the Golgi and participates in the localization of GNAQ to the plasma membrane. In terms of processing, histaminylated at Gln-209 residues by TGM2.

It is found in the cell membrane. It localises to the golgi apparatus. Its subcellular location is the nucleus. The protein localises to the nucleus membrane. It catalyses the reaction GTP + H2O = GDP + phosphate + H(+). Its function is as follows. Guanine nucleotide-binding proteins (G proteins) function as transducers downstream of G protein-coupled receptors (GPCRs) in numerous signaling cascades. The alpha chain contains the guanine nucleotide binding site and alternates between an active, GTP-bound state and an inactive, GDP-bound state. Signaling by an activated GPCR promotes GDP release and GTP binding. The alpha subunit has a low GTPase activity that converts bound GTP to GDP, thereby terminating the signal. Both GDP release and GTP hydrolysis are modulated by numerous regulatory proteins. Signaling is mediated via phospholipase C-beta-dependent inositol lipid hydrolysis for signal propagation: activates phospholipase C-beta: following GPCR activation, GNAQ activates PLC-beta (PLCB1, PLCB2, PLCB3 or PLCB4), leading to production of diacylglycerol (DAG) and inositol 1,4,5-trisphosphate (IP3). Required for platelet activation. Regulates B-cell selection and survival and is required to prevent B-cell-dependent autoimmunity. Regulates chemotaxis of BM-derived neutrophils and dendritic cells (in vitro). Transduces FFAR4 signaling in response to long-chain fatty acids (LCFAs). Together with GNA11, required for heart development. This chain is Guanine nucleotide-binding protein G(q) subunit alpha (Gnaq), found in Mus musculus (Mouse).